The sequence spans 376 residues: MAKQDYYEILGVSKTAEEREIRKAYKRLAMKYHPDRNQGDKEAEAKFKEIKEAYEVLTDSQKRAAYDQYGHAAFEQGGMGGGGFGGGADFSDIFGDVFGDIFGGGRGRQRAARGADLRYNMELTLEEAVRGVTKEIRIPTLEECDVCHGSGAKPGTQPQTCPTCHGSGQVQMRQGFFAVQQTCPHCQGRGTLIKDPCNKCHGHGRVERSKTLSVKIPAGVDTGDRIRLAGEGEAGEHGAPAGDLYVQVQVKQHPIFEREGNNLYCEVPINFAMAALGGEIEVPTLDGRVKLKVPGETQTGKLFRMRGKGVKSVRGGAQGDLLCRVVVETQIGLDEKDKQLLHELHESYGGPTGEHNSPRSKSFFDGVKKFFDDLTR.

Positions 5 to 70 (DYYEILGVSK…QKRAAYDQYG (66 aa)) constitute a J domain. The CR-type zinc finger occupies 131–209 (GVTKEIRIPT…CHGHGRVERS (79 aa)). Residues cysteine 144, cysteine 147, cysteine 161, cysteine 164, cysteine 183, cysteine 186, cysteine 197, and cysteine 200 each contribute to the Zn(2+) site. CXXCXGXG motif repeat units lie at residues 144–151 (CDVCHGSG), 161–168 (CPTCHGSG), 183–190 (CPHCQGRG), and 197–204 (CNKCHGHG).

This sequence belongs to the DnaJ family. As to quaternary structure, homodimer. The cofactor is Zn(2+).

Its subcellular location is the cytoplasm. Participates actively in the response to hyperosmotic and heat shock by preventing the aggregation of stress-denatured proteins and by disaggregating proteins, also in an autonomous, DnaK-independent fashion. Unfolded proteins bind initially to DnaJ; upon interaction with the DnaJ-bound protein, DnaK hydrolyzes its bound ATP, resulting in the formation of a stable complex. GrpE releases ADP from DnaK; ATP binding to DnaK triggers the release of the substrate protein, thus completing the reaction cycle. Several rounds of ATP-dependent interactions between DnaJ, DnaK and GrpE are required for fully efficient folding. Also involved, together with DnaK and GrpE, in the DNA replication of plasmids through activation of initiation proteins. The protein is Chaperone protein DnaJ of Shigella flexneri.